The chain runs to 272 residues: 4-hydroxy-tetrahydrodipicolinate reductase (272 aa).

Residues 11 to 16 (GVSGRM) and Glu37 contribute to the NAD(+) site. An NADP(+)-binding site is contributed by Arg38. NAD(+) contacts are provided by residues 101–103 (GTT) and 125–128 (AGNM). The active-site Proton donor/acceptor is His158. His159 lines the (S)-2,3,4,5-tetrahydrodipicolinate pocket. Lys162 acts as the Proton donor in catalysis. 168 to 169 (GT) is a (S)-2,3,4,5-tetrahydrodipicolinate binding site.

This sequence belongs to the DapB family.

The protein localises to the cytoplasm. It carries out the reaction (S)-2,3,4,5-tetrahydrodipicolinate + NAD(+) + H2O = (2S,4S)-4-hydroxy-2,3,4,5-tetrahydrodipicolinate + NADH + H(+). It catalyses the reaction (S)-2,3,4,5-tetrahydrodipicolinate + NADP(+) + H2O = (2S,4S)-4-hydroxy-2,3,4,5-tetrahydrodipicolinate + NADPH + H(+). It functions in the pathway amino-acid biosynthesis; L-lysine biosynthesis via DAP pathway; (S)-tetrahydrodipicolinate from L-aspartate: step 4/4. Functionally, catalyzes the conversion of 4-hydroxy-tetrahydrodipicolinate (HTPA) to tetrahydrodipicolinate. The chain is 4-hydroxy-tetrahydrodipicolinate reductase from Roseobacter denitrificans (strain ATCC 33942 / OCh 114) (Erythrobacter sp. (strain OCh 114)).